A 634-amino-acid chain; its full sequence is 1-deoxy-D-xylulose-5-phosphate synthase (634 aa).

Thiamine diphosphate is bound by residues His73 and 114–116; that span reads GHS. Asp145 lines the Mg(2+) pocket. Residues 146 to 147, Asn174, Phe285, and Glu367 contribute to the thiamine diphosphate site; that span reads GS. Asn174 is a binding site for Mg(2+).

It belongs to the transketolase family. DXPS subfamily. In terms of assembly, homodimer. Mg(2+) is required as a cofactor. Thiamine diphosphate serves as cofactor.

It catalyses the reaction D-glyceraldehyde 3-phosphate + pyruvate + H(+) = 1-deoxy-D-xylulose 5-phosphate + CO2. Its pathway is metabolic intermediate biosynthesis; 1-deoxy-D-xylulose 5-phosphate biosynthesis; 1-deoxy-D-xylulose 5-phosphate from D-glyceraldehyde 3-phosphate and pyruvate: step 1/1. Catalyzes the acyloin condensation reaction between C atoms 2 and 3 of pyruvate and glyceraldehyde 3-phosphate to yield 1-deoxy-D-xylulose-5-phosphate (DXP). The protein is 1-deoxy-D-xylulose-5-phosphate synthase of Syntrophotalea carbinolica (strain DSM 2380 / NBRC 103641 / GraBd1) (Pelobacter carbinolicus).